The primary structure comprises 676 residues: DNA ligase (676 aa).

NAD(+) is bound by residues 41 to 45 (DLTYD), 90 to 91 (SL), and Glu123. Lys125 (N6-AMP-lysine intermediate) is an active-site residue. Residues Arg146, Glu180, Lys293, and Lys317 each coordinate NAD(+). 4 residues coordinate Zn(2+): Cys408, Cys411, Cys424, and Cys429.

This sequence belongs to the NAD-dependent DNA ligase family. LigA subfamily. Requires Mg(2+) as cofactor. Mn(2+) serves as cofactor.

It catalyses the reaction NAD(+) + (deoxyribonucleotide)n-3'-hydroxyl + 5'-phospho-(deoxyribonucleotide)m = (deoxyribonucleotide)n+m + AMP + beta-nicotinamide D-nucleotide.. In terms of biological role, DNA ligase that catalyzes the formation of phosphodiester linkages between 5'-phosphoryl and 3'-hydroxyl groups in double-stranded DNA using NAD as a coenzyme and as the energy source for the reaction. It is essential for DNA replication and repair of damaged DNA. In Borrelia turicatae (strain 91E135), this protein is DNA ligase.